A 158-amino-acid chain; its full sequence is PTS system fructose-specific EIIB component (158 aa).

The PTS EIIB type-2 domain occupies 1–98; sequence MKLVAVTSCP…AEAVVQKAVE (98 aa). Residue cysteine 9 is the Phosphocysteine intermediate of the active site. A Phosphocysteine; by EIIA modification is found at cysteine 9. A disordered region spans residues 104–147; the sequence is KTGSVTFGSGDDGEDADVGADDSSDDADAAESDEPVRRGGDPEK. Acidic residues predominate over residues 114–136; the sequence is DDGEDADVGADDSSDDADAAESD. The segment covering 137–147 has biased composition (basic and acidic residues); that stretch reads EPVRRGGDPEK.

The protein localises to the cytoplasm. It carries out the reaction D-fructose(out) + N(pros)-phospho-L-histidyl-[protein] = D-fructose 1-phosphate(in) + L-histidyl-[protein]. Functionally, the phosphoenolpyruvate-dependent sugar phosphotransferase system (sugar PTS), a major carbohydrate active transport system, catalyzes the phosphorylation of incoming sugar substrates concomitantly with their translocation across the cell membrane. The enzyme II PtfABC PTS system is involved in fructose transport. This Haloferax volcanii (strain ATCC 29605 / DSM 3757 / JCM 8879 / NBRC 14742 / NCIMB 2012 / VKM B-1768 / DS2) (Halobacterium volcanii) protein is PTS system fructose-specific EIIB component.